The chain runs to 202 residues: Large ribosomal subunit protein mL40 (202 aa).

Positions 42–79 are disordered; that stretch reads IQHQQTASYASKGKSGPPAGMFSGQKAGSKKSKGPKQV.

The protein belongs to the mitochondrion-specific ribosomal protein mL40 family. Component of the mitochondrial large ribosomal subunit (mt-LSU). Mature N.crassa 74S mitochondrial ribosomes consist of a small (37S) and a large (54S) subunit. The 37S small subunit contains a 16S ribosomal RNA (16S mt-rRNA) and 32 different proteins. The 54S large subunit contains a 23S rRNA (23S mt-rRNA) and 42 different proteins. mL40 is binding to NAD.

The protein resides in the mitochondrion. Functionally, component of the mitochondrial ribosome (mitoribosome), a dedicated translation machinery responsible for the synthesis of mitochondrial genome-encoded proteins, including at least some of the essential transmembrane subunits of the mitochondrial respiratory chain. The mitoribosomes are attached to the mitochondrial inner membrane and translation products are cotranslationally integrated into the membrane. This is Large ribosomal subunit protein mL40 (mrpl28) from Neurospora crassa (strain ATCC 24698 / 74-OR23-1A / CBS 708.71 / DSM 1257 / FGSC 987).